The sequence spans 205 residues: Small ribosomal subunit protein uS4 (205 aa).

The region spanning 95–163 is the S4 RNA-binding domain; it reads RRLDNVVYRL…FKENLESRDP (69 aa).

Belongs to the universal ribosomal protein uS4 family. In terms of assembly, part of the 30S ribosomal subunit. Contacts protein S5. The interaction surface between S4 and S5 is involved in control of translational fidelity.

Functionally, one of the primary rRNA binding proteins, it binds directly to 16S rRNA where it nucleates assembly of the body of the 30S subunit. With S5 and S12 plays an important role in translational accuracy. The protein is Small ribosomal subunit protein uS4 of Persephonella marina (strain DSM 14350 / EX-H1).